Consider the following 510-residue polypeptide: Sucrose transport protein SUC4 (510 aa).

Residues 1–34 (MATSDQDRRHRVTRNRPPIARPSTSSSRPVVSPP) form a disordered region. Topologically, residues 1-45 (MATSDQDRRHRVTRNRPPIARPSTSSSRPVVSPPRSKVSKRVLLR) are cytoplasmic. Positions 21–34 (RPSTSSSRPVVSPP) are enriched in low complexity. Serine 23 is modified (phosphoserine). A helical membrane pass occupies residues 46–66 (VASVACGIQFGWALQLSLLTP). Residues 67 to 71 (YVQEL) are Extracellular-facing. Residues 72 to 92 (GIPHAWASVIWLCGPLSGLFV) traverse the membrane as a helical segment. Topologically, residues 93–111 (QPLVGHSSDRCTSKYGRRR) are cytoplasmic. Residues 112–132 (PFIVAGAVAISISVMVIGHAA) form a helical membrane-spanning segment. Over 133 to 148 (DIGWAFGDREGKIKPR) the chain is Extracellular. A helical membrane pass occupies residues 149–169 (AIVAFVLGFWILDVANNMTQG). At 170 to 187 (PCRALLADLTENDNRRTR) the chain is on the cytoplasmic side. The helical transmembrane segment at 188 to 208 (VANGYFSLFMAVGNVLGYATG) threads the bilayer. The Extracellular segment spans residues 209–233 (SYNGWYKIFTFTKTVACNVECANLK). A helical transmembrane segment spans residues 234–254 (SAFYIDVVFIAITTILSVSAA). At 255–291 (HEVPLASLASEAHGQTSGTDEAFLSEIFGTFRYFPGN) the chain is on the cytoplasmic side. The helical transmembrane segment at 292–312 (VWIILLVTALTWIGWFPFILF) threads the bilayer. Topologically, residues 313–335 (DTDWMGREIYGGEPNIGTSYSAG) are extracellular. The chain crosses the membrane as a helical span at residues 336–356 (VSMGALGLMLNSVFLGITSVL). Topologically, residues 357–365 (MEKLCRKWG) are cytoplasmic. The helical transmembrane segment at 366 to 386 (AGFVWGISNILMAICFLGMII) threads the bilayer. Topologically, residues 387–402 (TSFVASHLGYIGHEQP) are extracellular. A helical membrane pass occupies residues 403–423 (PASIVFAAVLIFTILGIPLAI). The Cytoplasmic segment spans residues 424-443 (TYSVPYALISIRIESLGLGQ). The chain crosses the membrane as a helical span at residues 444–464 (GLSLGVLNLAIVIPQVIVSVG). Residues 465–477 (SGPWDQLFGGGNS) are Extracellular-facing. A helical transmembrane segment spans residues 478–498 (PALAVGAATGFIGGIVAILAL). Residues 499–510 (PRTRIQKPIPLP) are Cytoplasmic-facing.

It belongs to the glycoside-pentoside-hexuronide (GPH) cation symporter transporter (TC 2.A.2.4) family. Homodimer. Interacts with SUC2 and SUC3. As to expression, expressed in sink tissues, mostly in minor veins of sink leaves. Localized in companion cells.

It localises to the cell membrane. It catalyses the reaction sucrose(out) + H(+)(out) = sucrose(in) + H(+)(in). It participates in glycan biosynthesis; sucrose metabolism. Functionally, responsible for the transport of sucrose into the cell, with the concomitant uptake of protons (symport system). Can also transport maltose at a lesser rate. May also transport biotin. This Arabidopsis thaliana (Mouse-ear cress) protein is Sucrose transport protein SUC4.